A 547-amino-acid chain; its full sequence is Chaperonin GroEL (547 aa).

ATP-binding positions include Thr30–Pro33, Lys51, Asp87–Thr91, Gly415, Asn480–Ala482, and Asp496.

Belongs to the chaperonin (HSP60) family. Forms a cylinder of 14 subunits composed of two heptameric rings stacked back-to-back. Interacts with the co-chaperonin GroES.

The protein localises to the cytoplasm. The catalysed reaction is ATP + H2O + a folded polypeptide = ADP + phosphate + an unfolded polypeptide.. Together with its co-chaperonin GroES, plays an essential role in assisting protein folding. The GroEL-GroES system forms a nano-cage that allows encapsulation of the non-native substrate proteins and provides a physical environment optimized to promote and accelerate protein folding. The sequence is that of Chaperonin GroEL from Glaesserella parasuis serovar 5 (strain SH0165) (Haemophilus parasuis).